A 145-amino-acid chain; its full sequence is D-aminoacyl-tRNA deacylase (145 aa).

The Gly-cisPro motif, important for rejection of L-amino acids motif lies at 137–138 (GP).

It belongs to the DTD family. Homodimer.

The protein resides in the cytoplasm. It catalyses the reaction glycyl-tRNA(Ala) + H2O = tRNA(Ala) + glycine + H(+). It carries out the reaction a D-aminoacyl-tRNA + H2O = a tRNA + a D-alpha-amino acid + H(+). In terms of biological role, an aminoacyl-tRNA editing enzyme that deacylates mischarged D-aminoacyl-tRNAs. Also deacylates mischarged glycyl-tRNA(Ala), protecting cells against glycine mischarging by AlaRS. Acts via tRNA-based rather than protein-based catalysis; rejects L-amino acids rather than detecting D-amino acids in the active site. By recycling D-aminoacyl-tRNA to D-amino acids and free tRNA molecules, this enzyme counteracts the toxicity associated with the formation of D-aminoacyl-tRNA entities in vivo and helps enforce protein L-homochirality. The polypeptide is D-aminoacyl-tRNA deacylase (Shewanella loihica (strain ATCC BAA-1088 / PV-4)).